A 361-amino-acid chain; its full sequence is Peptide chain release factor 1 (361 aa).

At glutamine 237 the chain carries N5-methylglutamine. Basic and acidic residues predominate over residues 284-296; it reads EDEKRRSEEDSTR. Residues 284–305 are disordered; the sequence is EDEKRRSEEDSTRRNLVSSGDR.

The protein belongs to the prokaryotic/mitochondrial release factor family. Post-translationally, methylated by PrmC. Methylation increases the termination efficiency of RF1.

The protein localises to the cytoplasm. Peptide chain release factor 1 directs the termination of translation in response to the peptide chain termination codons UAG and UAA. This Shewanella piezotolerans (strain WP3 / JCM 13877) protein is Peptide chain release factor 1.